The chain runs to 284 residues: L-ribulose-5-phosphate 3-epimerase UlaE (284 aa).

This sequence belongs to the L-ribulose-5-phosphate 3-epimerase family.

The catalysed reaction is L-ribulose 5-phosphate = L-xylulose 5-phosphate. The protein operates within cofactor degradation; L-ascorbate degradation; D-xylulose 5-phosphate from L-ascorbate: step 3/4. In terms of biological role, catalyzes the isomerization of L-xylulose-5-phosphate to L-ribulose-5-phosphate. Is involved in the anaerobic L-ascorbate utilization. The sequence is that of L-ribulose-5-phosphate 3-epimerase UlaE from Salmonella choleraesuis (strain SC-B67).